Reading from the N-terminus, the 66-residue chain is Large ribosomal subunit protein bL35 (66 aa).

This sequence belongs to the bacterial ribosomal protein bL35 family.

The protein is Large ribosomal subunit protein bL35 of Borrelia garinii subsp. bavariensis (strain ATCC BAA-2496 / DSM 23469 / PBi) (Borreliella bavariensis).